A 411-amino-acid chain; its full sequence is Lissencephaly-1 homolog (411 aa).

In terms of domain architecture, LisH spans 7-39 (QREELNKAIADYLASNGFMEALESFKKETDMPG). The stretch at 54 to 80 (TSVIRLQKKVMDLEGRLAEAEKEYISG) forms a coiled coil. Over residues 77-89 (YISGTPSREKRSP) the composition is skewed to basic and acidic residues. The segment at 77–96 (YISGTPSREKRSPTEWIPRP) is disordered. WD repeat units follow at residues 104-145 (GHRA…RTIK), 146-187 (GHTD…RTMH), 188-227 (GHDHNVSSVCFLPSGDHVVSCSRDKSIKMWEVATGYCVRT), 230-269 (GHRDWVRMVRVNSDGSLLASCSNDQTVRVWVVGTKECKLE), 272-334 (EHDH…ALFT), 337-376 (GHDNWVRGVKFHPGGKYLLSASDDKTLRVWELAHQRCCKT), and 379-411 (AHSHFCTSLDFHRTAPYVVTGSVDQTVKVWECR).

The protein belongs to the WD repeat LIS1/nudF family.

It localises to the cytoplasm. The protein localises to the cytoskeleton. It is found in the microtubule organizing center. Its subcellular location is the centrosome. Positively regulates the activity of the minus-end directed microtubule motor protein dynein. May enhance dynein-mediated microtubule sliding by targeting dynein to the microtubule plus end. Required for several dynein- and microtubule-dependent processes. The chain is Lissencephaly-1 homolog from Ixodes scapularis (Black-legged tick).